The sequence spans 151 residues: Probable calcium-binding protein CML31 (151 aa).

4 consecutive EF-hand domains span residues Ala14–Glu42, Val44–Glu79, Arg84–Asp119, and Gln120–Ala151. Positions 20, 22, 24, 26, 31, 57, 59, 61, and 68 each coordinate Ca(2+). Ca(2+)-binding residues include Asp133, Asn135, Asp137, and Glu144.

Its function is as follows. Potential calcium sensor. This chain is Probable calcium-binding protein CML31 (CML31), found in Oryza sativa subsp. japonica (Rice).